A 77-amino-acid polypeptide reads, in one-letter code: SS18-like protein 2 (77 aa).

Positions 50–53 match the SH2-binding motif; that stretch reads YQHV.

Belongs to the SS18 family.

This is SS18-like protein 2 (Ss18l2) from Mus musculus (Mouse).